Consider the following 421-residue polypeptide: Serine--tRNA ligase (421 aa).

230–232 (TAE) is a binding site for L-serine. 259–261 (RRE) lines the ATP pocket. Glu282 contacts L-serine. 346-349 (EISS) provides a ligand contact to ATP. Ser381 provides a ligand contact to L-serine.

Belongs to the class-II aminoacyl-tRNA synthetase family. Type-1 seryl-tRNA synthetase subfamily. Homodimer. The tRNA molecule binds across the dimer.

The protein localises to the cytoplasm. The enzyme catalyses tRNA(Ser) + L-serine + ATP = L-seryl-tRNA(Ser) + AMP + diphosphate + H(+). It carries out the reaction tRNA(Sec) + L-serine + ATP = L-seryl-tRNA(Sec) + AMP + diphosphate + H(+). Its pathway is aminoacyl-tRNA biosynthesis; selenocysteinyl-tRNA(Sec) biosynthesis; L-seryl-tRNA(Sec) from L-serine and tRNA(Sec): step 1/1. Catalyzes the attachment of serine to tRNA(Ser). Is also able to aminoacylate tRNA(Sec) with serine, to form the misacylated tRNA L-seryl-tRNA(Sec), which will be further converted into selenocysteinyl-tRNA(Sec). The protein is Serine--tRNA ligase of Acidithiobacillus ferrooxidans (strain ATCC 23270 / DSM 14882 / CIP 104768 / NCIMB 8455) (Ferrobacillus ferrooxidans (strain ATCC 23270)).